Here is a 905-residue protein sequence, read N- to C-terminus: Protein translocase subunit SecA (905 aa).

ATP contacts are provided by residues Q89, 107–111, and D502; that span reads GEGKT. 4 residues coordinate Zn(2+): C889, C891, C900, and H901.

It belongs to the SecA family. Monomer and homodimer. Part of the essential Sec protein translocation apparatus which comprises SecA, SecYEG and auxiliary proteins SecDF-YajC and YidC. Zn(2+) serves as cofactor.

Its subcellular location is the cell inner membrane. The protein localises to the cytoplasm. It carries out the reaction ATP + H2O + cellular proteinSide 1 = ADP + phosphate + cellular proteinSide 2.. Part of the Sec protein translocase complex. Interacts with the SecYEG preprotein conducting channel. Has a central role in coupling the hydrolysis of ATP to the transfer of proteins into and across the cell membrane, serving both as a receptor for the preprotein-SecB complex and as an ATP-driven molecular motor driving the stepwise translocation of polypeptide chains across the membrane. In Bartonella tribocorum (strain CIP 105476 / IBS 506), this protein is Protein translocase subunit SecA.